The sequence spans 349 residues: Probable sugar phosphate/phosphate translocator At5g25400 (349 aa).

The next 10 helical transmembrane spans lie at 15 to 35, 49 to 69, 89 to 109, 113 to 133, 141 to 161, 165 to 185, 205 to 225, 236 to 256, 263 to 283, and 286 to 306; these read IIIS…VIVY, FPIS…FLLI, VVPI…AYIY, SFIQ…GVLF, ETMM…YGEA, VWGV…LVMI, VAPC…FPIL, LIFG…FLLV, TMNV…WSVI, and TVTP…AYYN. Residues 38–156 enclose the EamA domain; sequence YILDKKMYDW…LSISFGVAIA (119 aa). The interval 321–349 is disordered; the sequence is TAQQVDEETGRLLEEREGNEGGRKNEPED. Positions 328 to 349 are enriched in basic and acidic residues; it reads ETGRLLEEREGNEGGRKNEPED.

The protein belongs to the TPT transporter family. TPT (TC 2.A.7.9) subfamily.

Its subcellular location is the membrane. The polypeptide is Probable sugar phosphate/phosphate translocator At5g25400 (Arabidopsis thaliana (Mouse-ear cress)).